A 573-amino-acid polypeptide reads, in one-letter code: 2-succinyl-5-enolpyruvyl-6-hydroxy-3-cyclohexene-1-carboxylate synthase (573 aa).

This sequence belongs to the TPP enzyme family. MenD subfamily. In terms of assembly, homodimer. Requires Mg(2+) as cofactor. It depends on Mn(2+) as a cofactor. Thiamine diphosphate serves as cofactor.

It carries out the reaction isochorismate + 2-oxoglutarate + H(+) = 5-enolpyruvoyl-6-hydroxy-2-succinyl-cyclohex-3-ene-1-carboxylate + CO2. Its pathway is quinol/quinone metabolism; 1,4-dihydroxy-2-naphthoate biosynthesis; 1,4-dihydroxy-2-naphthoate from chorismate: step 2/7. It participates in quinol/quinone metabolism; menaquinone biosynthesis. Functionally, catalyzes the thiamine diphosphate-dependent decarboxylation of 2-oxoglutarate and the subsequent addition of the resulting succinic semialdehyde-thiamine pyrophosphate anion to isochorismate to yield 2-succinyl-5-enolpyruvyl-6-hydroxy-3-cyclohexene-1-carboxylate (SEPHCHC). The chain is 2-succinyl-5-enolpyruvyl-6-hydroxy-3-cyclohexene-1-carboxylate synthase from Shewanella baltica (strain OS155 / ATCC BAA-1091).